A 113-amino-acid chain; its full sequence is MNTVRVTFLLVFVLAVSLGQADKDENRMEMQEKTEQGKSYLDFAENLLLQKLEELEAKLLEEDSEESRNSRQKRCIGEGVPCDENDPRCCSGLVCLKPTLHGIWYKSYYCCKK.

Residues 1-21 (MNTVRVTFLLVFVLAVSLGQA) form the signal peptide. The propeptide occupies 22–74 (DKDENRMEMQEKTEQGKSYLDFAENLLLQKLEELEAKLLEEDSEESRNSRQKR). Positions 61–83 (EEDSEESRNSRQKRCIGEGVPCD) are disordered. Disulfide bonds link Cys-75/Cys-90, Cys-82/Cys-95, and Cys-89/Cys-110.

Belongs to the neurotoxin 14 (magi-1) family. 01 (HNTX-16) subfamily. In terms of tissue distribution, expressed by the venom gland.

The protein localises to the secreted. Its function is as follows. Probable ion channel inhibitor. The protein is U11-theraphotoxin-Hhn1s of Cyriopagopus hainanus (Chinese bird spider).